We begin with the raw amino-acid sequence, 287 residues long: ATP synthase gamma chain (287 aa).

This sequence belongs to the ATPase gamma chain family. In terms of assembly, F-type ATPases have 2 components, CF(1) - the catalytic core - and CF(0) - the membrane proton channel. CF(1) has five subunits: alpha(3), beta(3), gamma(1), delta(1), epsilon(1). CF(0) has three main subunits: a, b and c.

It localises to the cell inner membrane. In terms of biological role, produces ATP from ADP in the presence of a proton gradient across the membrane. The gamma chain is believed to be important in regulating ATPase activity and the flow of protons through the CF(0) complex. In Colwellia maris, this protein is ATP synthase gamma chain.